We begin with the raw amino-acid sequence, 299 residues long: Protein U23 (299 aa).

The signal sequence occupies residues 1 to 27 (MRKSEFNAKSCFLMIGICVFNLNSSSC). Residues 247 to 267 (LVIWICGISFVGAFIIVIVIL) form a helical membrane-spanning segment.

It is found in the host membrane. This Human herpesvirus 6B (strain Z29) (HHV-6 variant B) protein is Protein U23 (U23).